The following is a 264-amino-acid chain: Thiazole synthase (264 aa).

The active-site Schiff-base intermediate with DXP is lysine 104. 1-deoxy-D-xylulose 5-phosphate-binding positions include glycine 165, 191–192 (AG), and 213–214 (NT).

The protein belongs to the ThiG family. In terms of assembly, homotetramer. Forms heterodimers with either ThiH or ThiS.

The protein resides in the cytoplasm. It carries out the reaction [ThiS sulfur-carrier protein]-C-terminal-Gly-aminoethanethioate + 2-iminoacetate + 1-deoxy-D-xylulose 5-phosphate = [ThiS sulfur-carrier protein]-C-terminal Gly-Gly + 2-[(2R,5Z)-2-carboxy-4-methylthiazol-5(2H)-ylidene]ethyl phosphate + 2 H2O + H(+). It functions in the pathway cofactor biosynthesis; thiamine diphosphate biosynthesis. Its function is as follows. Catalyzes the rearrangement of 1-deoxy-D-xylulose 5-phosphate (DXP) to produce the thiazole phosphate moiety of thiamine. Sulfur is provided by the thiocarboxylate moiety of the carrier protein ThiS. In vitro, sulfur can be provided by H(2)S. The protein is Thiazole synthase of Oleidesulfovibrio alaskensis (strain ATCC BAA-1058 / DSM 17464 / G20) (Desulfovibrio alaskensis).